The chain runs to 481 residues: Sulfate adenylyltransferase subunit 1 (481 aa).

The tr-type G domain maps to 22–236 (KDLLRFITCG…LLDSIRLDAD (215 aa)). The segment at 31-38 (GSVDDGKS) is G1. 31–38 (GSVDDGKS) is a binding site for GTP. The interval 89 to 93 (GITID) is G2. The G3 stretch occupies residues 110–113 (DCPG). GTP is bound by residues 110 to 114 (DCPGH) and 165 to 168 (NKMD). The interval 165 to 168 (NKMD) is G4. Positions 202–204 (SAL) are G5.

This sequence belongs to the TRAFAC class translation factor GTPase superfamily. Classic translation factor GTPase family. CysN/NodQ subfamily. Heterodimer composed of CysD, the smaller subunit, and CysN.

The catalysed reaction is sulfate + ATP + H(+) = adenosine 5'-phosphosulfate + diphosphate. It participates in sulfur metabolism; hydrogen sulfide biosynthesis; sulfite from sulfate: step 1/3. In terms of biological role, with CysD forms the ATP sulfurylase (ATPS) that catalyzes the adenylation of sulfate producing adenosine 5'-phosphosulfate (APS) and diphosphate, the first enzymatic step in sulfur assimilation pathway. APS synthesis involves the formation of a high-energy phosphoric-sulfuric acid anhydride bond driven by GTP hydrolysis by CysN coupled to ATP hydrolysis by CysD. This Laribacter hongkongensis (strain HLHK9) protein is Sulfate adenylyltransferase subunit 1.